The sequence spans 96 residues: Beta-defensin 20 (96 aa).

The N-terminal stretch at 1 to 21 is a signal peptide; it reads MKLPQLLLILLFVVLADSVQP. Disulfide bonds link C24-C52, C32-C46, and C36-C53.

Belongs to the beta-defensin family.

Its subcellular location is the secreted. Functionally, has antibacterial activity. The polypeptide is Beta-defensin 20 (Defb20) (Rattus norvegicus (Rat)).